The primary structure comprises 1461 residues: Neogenin (1461 aa).

The N-terminal stretch at 1-33 (MAAERGARRLLSTPSFWLYCLLLLGRRAPGAAA) is a signal peptide. Topologically, residues 34–1105 (ARSGSAPQSP…PTSPLDSNML (1072 aa)) are extracellular. Ig-like C2-type domains lie at 52–141 (PFYF…TIIS), 152–238 (PRFT…VELK), 243–336 (PEVI…AELT), and 341–426 (PEFL…AQLI). An N-linked (GlcNAc...) asparagine glycan is attached at N73. 3 disulfides stabilise this stretch: C74/C129, C173/C221, and C270/C320. An N-linked (GlcNAc...) asparagine glycan is attached at N210. A glycan (N-linked (GlcNAc...) asparagine) is linked at N326. A disulfide bridge connects residues C362 and C410. Fibronectin type-III domains lie at 441 to 535 (APRD…TQPE), 541 to 631 (PAPN…TLSD), 636 to 731 (APQN…TFES), 741 to 831 (VPSS…RPHT), 856 to 952 (PPVG…TFEL), and 957 to 1054 (PPKD…TPKA). N-linked (GlcNAc...) asparagine glycosylation is found at N470 and N489. Residues N639 and N715 are each glycosylated (N-linked (GlcNAc...) asparagine). N-linked (GlcNAc...) asparagine glycosylation occurs at N909. Positions 1041–1097 (GPMSEAVQFRTPKADSSDKMPNDQASGSGGKGSRLPDLGSDYKPPMSGSNSPHGSPT) are disordered. Residues 1052 to 1061 (PKADSSDKMP) show a composition bias toward basic and acidic residues. Positions 1087-1097 (SGSNSPHGSPT) are enriched in polar residues. The chain crosses the membrane as a helical span at residues 1106–1126 (LVIIVSVGVITIVVVVIIAVF). Residues 1127–1461 (CTRRTTSHQK…MKDLNAITTA (335 aa)) lie on the Cytoplasmic side of the membrane. Disordered regions lie at residues 1138–1160 (KRAACKSVNGSHKYKGNSKDVKP), 1174–1206 (PIDKSPDPNPIMTDTPIPRNSQDITPVDNSMDS), 1235–1276 (PKMM…PARS), and 1289–1381 (TSMS…ALPS). Phosphoserine is present on residues S1178 and S1194. A compositionally biased stretch (polar residues) spans 1191–1206 (PRNSQDITPVDNSMDS). Position 1198 is a phosphothreonine (T1198). Composition is skewed to polar residues over residues 1289 to 1322 (TSMSLSDRANSTESVRNTPSTDTMPASSSQTCCT) and 1330 to 1349 (ATSSSYLASSQEEDSGQSLP). Residues 1366 to 1375 (AIPPPGPPTY) show a composition bias toward pro residues. S1401 is subject to Phosphoserine. T1404 carries the post-translational modification Phosphothreonine. Phosphoserine occurs at positions 1432, 1434, and 1435.

The protein belongs to the immunoglobulin superfamily. DCC family. Interacts with MYO10. Interacts with RGMA and RGMB. Interacts with BMP2, BMP4, BMP6, and BMP7. As to expression, widely expressed and also in cancer cell lines.

The protein localises to the cell membrane. Multi-functional cell surface receptor regulating cell adhesion in many diverse developmental processes, including neural tube and mammary gland formation, myogenesis and angiogenesis. Receptor for members of the BMP, netrin, and repulsive guidance molecule (RGM) families. Netrin-Neogenin interactions result in a chemoattractive axon guidance response and cell-cell adhesion, the interaction between NEO1/Neogenin and RGMa and RGMb induces a chemorepulsive response. The chain is Neogenin (NEO1) from Homo sapiens (Human).